A 212-amino-acid chain; its full sequence is Ribonuclease HII (212 aa).

The RNase H type-2 domain maps to 7–212; it reads SQILGIDEAG…TIENITKSTE (206 aa). The a divalent metal cation site is built by Asp13, Glu14, and Asp111.

This sequence belongs to the RNase HII family. Mn(2+) serves as cofactor. Mg(2+) is required as a cofactor.

The protein localises to the cytoplasm. The enzyme catalyses Endonucleolytic cleavage to 5'-phosphomonoester.. Endonuclease that specifically degrades the RNA of RNA-DNA hybrids. The protein is Ribonuclease HII of Methanosphaera stadtmanae (strain ATCC 43021 / DSM 3091 / JCM 11832 / MCB-3).